We begin with the raw amino-acid sequence, 181 residues long: uncharacterized protein (181 aa).

Transmembrane regions (helical) follow at residues 3-23 (LSQTALFIGSIINLNALVLIL), 67-87 (ALLLIFIIGMLKGIIYFGLSV), 92-112 (VLGVLTVLKSIGLAIFYVLFI), and 159-179 (MFILLFLNNFMLDLLGGLWII).

The protein belongs to the YggT family.

It localises to the cell membrane. This is an uncharacterized protein from Haemophilus influenzae (strain ATCC 51907 / DSM 11121 / KW20 / Rd).